The sequence spans 384 residues: tRNA(Met) cytidine acetate ligase (384 aa).

Residues 7–20 (VAEY…HEFL), glycine 101, asparagine 153, and arginine 178 contribute to the ATP site.

It belongs to the TmcAL family.

The protein localises to the cytoplasm. The catalysed reaction is cytidine(34) in elongator tRNA(Met) + acetate + ATP = N(4)-acetylcytidine(34) in elongator tRNA(Met) + AMP + diphosphate. Functionally, catalyzes the formation of N(4)-acetylcytidine (ac(4)C) at the wobble position of elongator tRNA(Met), using acetate and ATP as substrates. First activates an acetate ion to form acetyladenylate (Ac-AMP) and then transfers the acetyl group to tRNA to form ac(4)C34. This chain is tRNA(Met) cytidine acetate ligase, found in Lactobacillus delbrueckii subsp. bulgaricus (strain ATCC BAA-365 / Lb-18).